The following is a 90-amino-acid chain: Small ribosomal subunit protein bS18 (90 aa).

Belongs to the bacterial ribosomal protein bS18 family. As to quaternary structure, part of the 30S ribosomal subunit. Forms a tight heterodimer with protein bS6.

In terms of biological role, binds as a heterodimer with protein bS6 to the central domain of the 16S rRNA, where it helps stabilize the platform of the 30S subunit. This is Small ribosomal subunit protein bS18 from Porphyromonas gingivalis (strain ATCC 33277 / DSM 20709 / CIP 103683 / JCM 12257 / NCTC 11834 / 2561).